Here is a 415-residue protein sequence, read N- to C-terminus: Leucine-rich repeat-containing protein 34 (415 aa).

2 LRR repeats span residues 246–272 and 274–296; these read SLRY…LKSN and TLEV…LSET.

In terms of assembly, interacts with NPM1 and NCL. In terms of tissue distribution, expressed in testis where it specifically localizes to germ cells (at protein level). Not detected in other tissues tested (at protein level). Expressed in pluripotent embryonic stem cells and multipotent adult germline stem cells.

Its subcellular location is the nucleus. The protein localises to the nucleolus. The protein resides in the cytoplasm. In terms of biological role, highly expressed in stem cells where it may be involved in regulation of pluripotency. In embryonic stem cells (ESCs), important for normal expression of the pluripotency regulators POU5F1/OCT4 and KLF4. Also important for expression of the ectodermal marker gene NES and the endodermal marker gene GATA4. Promotes stem cell proliferation in vitro. In Mus musculus (Mouse), this protein is Leucine-rich repeat-containing protein 34.